Here is a 352-residue protein sequence, read N- to C-terminus: Ribosomal RNA large subunit methyltransferase M (352 aa).

S-adenosyl-L-methionine is bound by residues Ser-184, 217-220 (APGG), Asp-236, Asp-256, and Asp-272. Catalysis depends on Lys-301, which acts as the Proton acceptor.

Belongs to the class I-like SAM-binding methyltransferase superfamily. RNA methyltransferase RlmE family. RlmM subfamily. As to quaternary structure, monomer.

It is found in the cytoplasm. It catalyses the reaction cytidine(2498) in 23S rRNA + S-adenosyl-L-methionine = 2'-O-methylcytidine(2498) in 23S rRNA + S-adenosyl-L-homocysteine + H(+). In terms of biological role, catalyzes the 2'-O-methylation at nucleotide C2498 in 23S rRNA. The polypeptide is Ribosomal RNA large subunit methyltransferase M (Pseudomonas aeruginosa (strain LESB58)).